A 511-amino-acid polypeptide reads, in one-letter code: ATP synthase subunit alpha 1 (511 aa).

170–177 contributes to the ATP binding site; the sequence is GDRQTGKT.

It belongs to the ATPase alpha/beta chains family. In terms of assembly, F-type ATPases have 2 components, CF(1) - the catalytic core - and CF(0) - the membrane proton channel. CF(1) has five subunits: alpha(3), beta(3), gamma(1), delta(1), epsilon(1). CF(0) has three main subunits: a(1), b(2) and c(9-12). The alpha and beta chains form an alternating ring which encloses part of the gamma chain. CF(1) is attached to CF(0) by a central stalk formed by the gamma and epsilon chains, while a peripheral stalk is formed by the delta and b chains.

It localises to the cell inner membrane. It carries out the reaction ATP + H2O + 4 H(+)(in) = ADP + phosphate + 5 H(+)(out). Produces ATP from ADP in the presence of a proton gradient across the membrane. The alpha chain is a regulatory subunit. In Gluconobacter oxydans (strain 621H) (Gluconobacter suboxydans), this protein is ATP synthase subunit alpha 1.